The primary structure comprises 1786 residues: Laminin subunit beta-1 (1786 aa).

The signal sequence occupies residues 1–21 (MGLLQVFAFGVLALWGTRVCA). In terms of domain architecture, Laminin N-terminal spans 31 to 270 (AEGSCYPATG…AVYDMVVRGN (240 aa)). N-linked (GlcNAc...) asparagine glycosylation is present at asparagine 120. Residue serine 250 is modified to Phosphoserine. Cystine bridges form between cysteine 271-cysteine 280, cysteine 273-cysteine 298, cysteine 300-cysteine 309, cysteine 312-cysteine 332, cysteine 335-cysteine 344, cysteine 337-cysteine 362, cysteine 365-cysteine 374, cysteine 377-cysteine 395, cysteine 398-cysteine 411, cysteine 400-cysteine 426, cysteine 428-cysteine 437, cysteine 440-cysteine 455, cysteine 458-cysteine 472, cysteine 460-cysteine 479, cysteine 481-cysteine 490, cysteine 493-cysteine 507, cysteine 510-cysteine 522, cysteine 512-cysteine 529, and cysteine 531-cysteine 540. 4 Laminin EGF-like domains span residues 271–334 (CFCY…ACKK), 335–397 (CNCN…LCEP), 398–457 (CTCD…GCKS), and 458–509 (CACN…GCRP). An N-linked (GlcNAc...) asparagine glycan is attached at asparagine 356. Residues 510–540 (CDCDLGGALNNSCSEDSGQCSCLPHMIGRQC) form the Laminin EGF-like 5; truncated domain. The N-linked (GlcNAc...) asparagine glycan is linked to asparagine 519. The 219-residue stretch at 549-767 (FTTLDHYIYE…IIFSISALIH (219 aa)) folds into the Laminin IV type B domain. An N-linked (GlcNAc...) asparagine glycan is attached at asparagine 677. 32 disulfide bridges follow: cysteine 773–cysteine 785, cysteine 775–cysteine 792, cysteine 794–cysteine 803, cysteine 806–cysteine 818, cysteine 821–cysteine 833, cysteine 823–cysteine 840, cysteine 842–cysteine 851, cysteine 854–cysteine 864, cysteine 867–cysteine 876, cysteine 869–cysteine 883, cysteine 886–cysteine 895, cysteine 898–cysteine 914, cysteine 917–cysteine 933, cysteine 919–cysteine 944, cysteine 946–cysteine 955, cysteine 958–cysteine 973, cysteine 976–cysteine 990, cysteine 978–cysteine 997, cysteine 1000–cysteine 1009, cysteine 1012–cysteine 1025, cysteine 1028–cysteine 1040, cysteine 1030–cysteine 1054, cysteine 1056–cysteine 1065, cysteine 1068–cysteine 1081, cysteine 1084–cysteine 1096, cysteine 1086–cysteine 1103, cysteine 1105–cysteine 1114, cysteine 1117–cysteine 1129, cysteine 1132–cysteine 1144, cysteine 1134–cysteine 1151, cysteine 1153–cysteine 1162, and cysteine 1165–cysteine 1176. 8 consecutive Laminin EGF-like domains span residues 773-820 (CECD…GCKP), 821-866 (CDCH…SCQP), 867-916 (CQCN…HCRP), 917-975 (CPCP…SCQP), 976-1027 (CQCH…DCRK), 1028-1083 (CVCN…GCGP), 1084-1131 (CNCN…ECRA), and 1132-1178 (CDCD…DCTP). Asparagine 1041 carries N-linked (GlcNAc...) asparagine glycosylation. The domain II stretch occupies residues 1179–1397 (CHQCFALWDA…LDLSAVAQMT (219 aa)). Residues asparagine 1195, asparagine 1279, asparagine 1336, and asparagine 1343 are each glycosylated (N-linked (GlcNAc...) asparagine). Positions 1216-1315 (YRETVDSVEK…LEFIKNSDIQ (100 aa)) form a coiled coil. Residues 1368 to 1388 (KEQQEEQARLLDELAGKLQSL) adopt a coiled-coil conformation. The domain alpha stretch occupies residues 1398–1430 (CGTPPGADCSESECGGPNCRTDEGEKKCGGPGC). A domain I region spans residues 1431 to 1786 (GGLVTVAHSA…EKVAVYSTCL (356 aa)). The stretch at 1448-1778 (DRDVLSALAE…RSLLKDISEK (331 aa)) forms a coiled coil. Residue asparagine 1487 is glycosylated (N-linked (GlcNAc...) asparagine). A Phosphoserine modification is found at serine 1496. Residues asparagine 1542 and asparagine 1643 are each glycosylated (N-linked (GlcNAc...) asparagine). At serine 1666 the chain carries Phosphoserine.

As to quaternary structure, laminin is a complex glycoprotein, consisting of three different polypeptide chains (alpha, beta, gamma), which are bound to each other by disulfide bonds into a cross-shaped molecule comprising one long and three short arms with globules at each end. Beta-1 is a subunit of laminin-1 (laminin-111 or EHS laminin), laminin-2 (laminin-211 or merosin), laminin-6 (laminin-311 or K-laminin), laminin-8 (laminin-411), laminin-10 (laminin-511) and laminin-12 (laminin-213). Interacts with ITGB1. As to expression, widely expressed in the embryo. High levels are detected in the cerebellar basement membrane, at postnatal day 7.

It localises to the secreted. Its subcellular location is the extracellular space. The protein localises to the extracellular matrix. It is found in the basement membrane. Its function is as follows. Binding to cells via a high affinity receptor, laminin is thought to mediate the attachment, migration and organization of cells into tissues during embryonic development by interacting with other extracellular matrix components. Involved in the organization of the laminar architecture of the cerebral cortex. It is probably required for the integrity of the basement membrane/glia limitans that serves as an anchor point for the endfeet of radial glial cells and as a physical barrier to migrating neurons. Radial glial cells play a central role in cerebral cortical development, where they act both as the proliferative unit of the cerebral cortex and a scaffold for neurons migrating toward the pial surface. In Mus musculus (Mouse), this protein is Laminin subunit beta-1 (Lamb1).